The chain runs to 445 residues: Ribosomal protein uS12 methylthiotransferase RimO (445 aa).

One can recognise an MTTase N-terminal domain in the interval 10–120 (PKVGFVSLGC…VVNAVHEVVP (111 aa)). C19, C55, C84, C153, C157, and C160 together coordinate [4Fe-4S] cluster. Residues 139-378 (LTPRHYAYLK…AHQQAISSAR (240 aa)) enclose the Radical SAM core domain. The 66-residue stretch at 380-445 (QLRIGREIEV…DEYDLWAEQI (66 aa)) folds into the TRAM domain.

The protein belongs to the methylthiotransferase family. RimO subfamily. Requires [4Fe-4S] cluster as cofactor.

Its subcellular location is the cytoplasm. The catalysed reaction is L-aspartate(89)-[ribosomal protein uS12]-hydrogen + (sulfur carrier)-SH + AH2 + 2 S-adenosyl-L-methionine = 3-methylsulfanyl-L-aspartate(89)-[ribosomal protein uS12]-hydrogen + (sulfur carrier)-H + 5'-deoxyadenosine + L-methionine + A + S-adenosyl-L-homocysteine + 2 H(+). Catalyzes the methylthiolation of an aspartic acid residue of ribosomal protein uS12. This is Ribosomal protein uS12 methylthiotransferase RimO from Pseudomonas fluorescens (strain Pf0-1).